A 290-amino-acid chain; its full sequence is Phosphatidylglycerol--prolipoprotein diacylglyceryl transferase (290 aa).

The next 7 helical transmembrane spans lie at 21-41 (VSLH…MWLA), 60-80 (LLYA…VLFY), 96-116 (WDGG…MLWF), 124-144 (FFQV…AGRL), 199-219 (SQLY…NLFI), 226-246 (GSVS…VECF), and 259-279 (VISM…IMMI). Position 143 (Arg143) interacts with a 1,2-diacyl-sn-glycero-3-phospho-(1'-sn-glycerol).

This sequence belongs to the Lgt family.

Its subcellular location is the cell inner membrane. It catalyses the reaction L-cysteinyl-[prolipoprotein] + a 1,2-diacyl-sn-glycero-3-phospho-(1'-sn-glycerol) = an S-1,2-diacyl-sn-glyceryl-L-cysteinyl-[prolipoprotein] + sn-glycerol 1-phosphate + H(+). Its pathway is protein modification; lipoprotein biosynthesis (diacylglyceryl transfer). Its function is as follows. Catalyzes the transfer of the diacylglyceryl group from phosphatidylglycerol to the sulfhydryl group of the N-terminal cysteine of a prolipoprotein, the first step in the formation of mature lipoproteins. This Yersinia enterocolitica serotype O:8 / biotype 1B (strain NCTC 13174 / 8081) protein is Phosphatidylglycerol--prolipoprotein diacylglyceryl transferase.